Reading from the N-terminus, the 910-residue chain is Eukaryotic translation initiation factor 3 subunit C (910 aa).

Positions 1 to 21 (MSRFFANGSDSESESSEDEIQ) are disordered. Positions 11 to 20 (SESESSEDEI) are enriched in acidic residues. A phosphoserine mark is found at Ser34, Ser165, Ser176, and Ser185. The interval 157-281 (FREAPDQESE…KRAEDDEDGE (125 aa)) is disordered. Residues 162 to 186 (DQESEAEDEVVAQESDGGDAGDDSD) are compositionally biased toward acidic residues. The segment covering 193-207 (EAAPKAVKSAPAKAA) has biased composition (low complexity). Acidic residues predominate over residues 209 to 235 (ADDDDSDDSIDWDSDSESETESSDDEN). Basic and acidic residues predominate over residues 240-268 (MRERFLKRTTEKEEKDDDKRKDKRKEQKV). In terms of domain architecture, PCI spans 639–815 (FHMHINLELL…ETVVMHRSEP (177 aa)). Residues 847–910 (FFQRGNMGNR…QQQVQTIDEE (64 aa)) form a disordered region. Residues 862-874 (NRNQNNQGGNWLG) show a composition bias toward low complexity. Basic residues predominate over residues 882–891 (RNRNQRGHHK). Positions 895 to 910 (DRQQQQQQQVQTIDEE) are enriched in low complexity.

The protein belongs to the eIF-3 subunit C family. Component of the eukaryotic translation initiation factor 3 (eIF-3) complex. The eIF-3 complex interacts with pix.

It localises to the cytoplasm. Component of the eukaryotic translation initiation factor 3 (eIF-3) complex, which is involved in protein synthesis of a specialized repertoire of mRNAs and, together with other initiation factors, stimulates binding of mRNA and methionyl-tRNAi to the 40S ribosome. The eIF-3 complex specifically targets and initiates translation of a subset of mRNAs involved in cell proliferation. The sequence is that of Eukaryotic translation initiation factor 3 subunit C from Drosophila yakuba (Fruit fly).